The chain runs to 45 residues: Defensin Tk-AMP-D4 (45 aa).

4 disulfide bridges follow: Cys3–Cys45, Cys14–Cys34, Cys20–Cys39, and Cys24–Cys41.

Functionally, plant defense peptide. The chain is Defensin Tk-AMP-D4 from Triticum kiharae (Wheat).